The primary structure comprises 209 residues: PRA1 family protein B1 (209 aa).

A2 is subject to N-acetylalanine. Helical transmembrane passes span 73 to 93 (LAYF…FSLF), 95 to 115 (HPLS…LYLF), 133 to 153 (ETLL…SVGS), 154 to 174 (LLTS…AFVV), and 185 to 205 (PANA…AAAV).

The protein belongs to the PRA1 family. Can form homodimer. Interacts with PRA1B2, PRA1B3, PRA1B4, PRA1B5, PRA1B6 and PRA1E.

It is found in the endosome membrane. Functionally, may be involved in both secretory and endocytic intracellular trafficking in the endosomal/prevacuolar compartments. This is PRA1 family protein B1 (PRA1B1) from Arabidopsis thaliana (Mouse-ear cress).